The chain runs to 333 residues: tRNA N6-adenosine threonylcarbamoyltransferase (333 aa).

His-108 and His-112 together coordinate Fe cation. Substrate is bound by residues 129–133, Asp-161, Glu-178, and Ser-258; that span reads LVSGG. Asp-286 contributes to the Fe cation binding site.

This sequence belongs to the KAE1 / TsaD family. The cofactor is Fe(2+).

It localises to the cytoplasm. The enzyme catalyses L-threonylcarbamoyladenylate + adenosine(37) in tRNA = N(6)-L-threonylcarbamoyladenosine(37) in tRNA + AMP + H(+). Required for the formation of a threonylcarbamoyl group on adenosine at position 37 (t(6)A37) in tRNAs that read codons beginning with adenine. Is probably involved in the transfer of the threonylcarbamoyl moiety of threonylcarbamoyl-AMP (TC-AMP) to the N6 group of A37. The sequence is that of tRNA N6-adenosine threonylcarbamoyltransferase from Pyrobaculum islandicum (strain DSM 4184 / JCM 9189 / GEO3).